Reading from the N-terminus, the 352-residue chain is Neutral protease 2 homolog ATEG_04941 (352 aa).

The signal sequence occupies residues 1-19 (MRFTALATAILPLACNVLA). The propeptide occupies 20–175 (LPAKTGEAPK…ASAVKPLDKR (156 aa)). Intrachain disulfides connect Cys-181–Cys-253 and Cys-260–Cys-278. His-303 contacts Zn(2+). Glu-304 is a catalytic residue. Zn(2+) is bound by residues His-307 and Asp-318.

It belongs to the peptidase M35 family. Zn(2+) is required as a cofactor.

It is found in the secreted. The catalysed reaction is Preferential cleavage of bonds with hydrophobic residues in P1'. Also 3-Asn-|-Gln-4 and 8-Gly-|-Ser-9 bonds in insulin B chain.. Its function is as follows. Secreted metalloproteinase that allows assimilation of proteinaceous substrates. Shows high activities on basic nuclear substrates such as histone and protamine. The chain is Neutral protease 2 homolog ATEG_04941 from Aspergillus terreus (strain NIH 2624 / FGSC A1156).